The following is a 434-amino-acid chain: Glutamyl-tRNA reductase (434 aa).

Substrate contacts are provided by residues 49–52 (TCNR), Ser-114, 119–121 (EPQ), and Gln-125. Cys-50 functions as the Nucleophile in the catalytic mechanism. Position 199 to 204 (199 to 204 (GAGETI)) interacts with NADP(+).

The protein belongs to the glutamyl-tRNA reductase family. Homodimer.

It catalyses the reaction (S)-4-amino-5-oxopentanoate + tRNA(Glu) + NADP(+) = L-glutamyl-tRNA(Glu) + NADPH + H(+). It participates in porphyrin-containing compound metabolism; protoporphyrin-IX biosynthesis; 5-aminolevulinate from L-glutamyl-tRNA(Glu): step 1/2. Its function is as follows. Catalyzes the NADPH-dependent reduction of glutamyl-tRNA(Glu) to glutamate 1-semialdehyde (GSA). In Pasteurella multocida (strain Pm70), this protein is Glutamyl-tRNA reductase.